We begin with the raw amino-acid sequence, 390 residues long: Cystathionine beta-lyase (390 aa).

Position 202 is an N6-(pyridoxal phosphate)lysine (K202).

This sequence belongs to the trans-sulfuration enzymes family. Requires pyridoxal 5'-phosphate as cofactor.

The protein resides in the cytoplasm. It localises to the nucleus. It carries out the reaction L,L-cystathionine + H2O = L-homocysteine + pyruvate + NH4(+). The catalysed reaction is an S-substituted L-cysteine + H2O = a thiol + pyruvate + NH4(+). It participates in amino-acid biosynthesis; L-methionine biosynthesis via de novo pathway; L-homocysteine from L-cystathionine: step 1/1. The protein is Cystathionine beta-lyase (str3) of Schizosaccharomyces pombe (strain 972 / ATCC 24843) (Fission yeast).